The following is a 482-amino-acid chain: Arginine/ornithine antiporter (482 aa).

The Cytoplasmic portion of the chain corresponds to 1–10 (MSQESSQKLR). The chain crosses the membrane as a helical span at residues 11–31 (LGALTALVVGSMIGGGIFSLP). Residues 32–40 (QNMAASADV) lie on the Periplasmic side of the membrane. A helical transmembrane segment spans residues 41-61 (GAVLIGWAITAVGMLTLAFVF). The Cytoplasmic segment spans residues 62-100 (QTLANRKPELDGGVYAYAKAGFGDYMGFSSAWGYWISAW). Residues 101-121 (LGNVGYFVLLFSTLGYFFPIF) traverse the membrane as a helical segment. Residues 122-124 (GKG) are Periplasmic-facing. The chain crosses the membrane as a helical span at residues 125–145 (DTVAAIVCASVLLWALHFLVL). The Cytoplasmic portion of the chain corresponds to 146–156 (RGIKEAAFINT). A helical transmembrane segment spans residues 157-177 (VTTVAKVVPLFLFILICLFAF). The Periplasmic segment spans residues 178–202 (KLDIFTADIWGKSNPDLGSVMNQVR). A helical membrane pass occupies residues 203–223 (NMMLVTVWVFIGIEGASIFSS). Residues 224–235 (RAEKRSDVGKAT) lie on the Cytoplasmic side of the membrane. The chain crosses the membrane as a helical span at residues 236 to 256 (VIGFITVLLLLVLVNVLSMGV). Residues 257–283 (MTQPELAKLQNPSMALVLEHVVGHWGA) are Periplasmic-facing. Residues 284–304 (VLISVGLLISLLGALLSWVLL) traverse the membrane as a helical segment. Over 305 to 333 (CAEIMFAAAKDHTMPEFLRRENANQVPAN) the chain is Cytoplasmic. The chain crosses the membrane as a helical span at residues 334–354 (ALWLTNICVQVFLVVVFFTSG). The Periplasmic portion of the chain corresponds to 355–365 (DPDGMDPYTKM). A helical membrane pass occupies residues 366–386 (LLLATSMILIPYFWSAAYGLL). At 387–403 (LTLKGETYENDARERSK) the chain is on the cytoplasmic side. The helical transmembrane segment at 404–424 (DLVIAGIAVAYAVWLLYAGGL) threads the bilayer. A topological domain (periplasmic) is located at residue Lys-425. A helical membrane pass occupies residues 426-446 (YLLLSALLYAPGAILFAKAKH). The Cytoplasmic segment spans residues 447 to 458 (EVGQPIFTGIEK). The chain crosses the membrane as a helical span at residues 459 to 479 (LIFAAVVIGALVAAYGLYDGF). Residues 480–482 (LTL) are Periplasmic-facing.

Belongs to the amino acid-polyamine-organocation (APC) superfamily. Basic amino acid/polyamine antiporter (APA) (TC 2.A.3.2) family.

The protein localises to the cell inner membrane. It catalyses the reaction L-ornithine(in) + L-arginine(out) = L-ornithine(out) + L-arginine(in). In terms of biological role, catalyzes electroneutral exchange between arginine and ornithine to allow high-efficiency energy conversion in the arginine deiminase pathway. Also mediates the proton motive force-driven uptake of arginine and ornithine, but the exchange is several orders of magnitude faster than the proton motive force-driven transport. This Pseudomonas aeruginosa (strain ATCC 15692 / DSM 22644 / CIP 104116 / JCM 14847 / LMG 12228 / 1C / PRS 101 / PAO1) protein is Arginine/ornithine antiporter.